Here is a 1227-residue protein sequence, read N- to C-terminus: MLKGQKEGEAEPVPEGDKSGAGSSPSGVRKGLRVPLGLVSHSFSSLAKHKEAERRLTDEEESLSSPQDREDDAASPNIMAKSIAGLLTTASMYVGIGDIHRAEQLATGQPETDAGADETEDEMDEAGDETGDDADAPATGTDGEEESRPVSAQESRRSTLFELSIEPHPESHTAQASRTKNRRSRMTSKLRSKFNLDDDEELVREYPCWLLRDVLIQGHIYLTSRNLLFFAFLYKSNGSARLTGNLSICNNGLSISGISGKPTRYWTVLKDHTLSLYSSSTDLYFPVLTIDLRYVTKVQHCKNNGKDTRQFHITTESKTYTFYSDNEHSARSWSSALKKQVFATQNSDNDSMSVRIPLSNIIDVEEQAIVEQGLTLRVRVMESSDSFALDDYFFMFFNNAGSQLKELIQIQVANLEMLGAANVDYARHPLPPDTEASLPAVASDAAPQDAAIASEAAADAAAADTASHSPSTNAEPRARGRSTERAMAASAYLFGRLTSPRRDDAKQLSPSKVKLRFRSVADTLKLTTPRQPGSDAPQEPEPETTILESRPRLNYWSPRPFTTMRSMWNAQPVHYAAKGMSLFADDDELMIGDEAELLAADKRFKAHFSLTDDESLVASYYTYLNRSMPLYGKIYLGKTIMCFRSLLPGSKTKMILPLHDVENCYKEQGFRFGYFGLVVVIYGHEELFFEFASQKSRDDAEYVILKIIDSLKPVDGVMADDMSAGAYSLKAAQGRDATTDAKVKLFEQRISSVGYDIPIMVEDNPFYKTTITPKKFYTFGMLTIGSRGDVQPYIALGKGLLQEGHRVVVISHAEFGDWVRSHGLQFRAIAGDPAELMALMVQHGSMNVGLIREAASTFRNWIRDLLETAWEACQGIDVLIESPSAMAGIHIAEALQIPYFRAFTMPWTKTRSYPHAFIVPDQKRGGNYNYFTHVLFENIFWKGINSQVNRWRVEKLGLKKTNLEFMQQGKVPFLYNMSPTVFPPSVDFAEWIKVTGYWFLNESSNYVPPQALLEFMAKARRLDKKLVYIGFGSIVVKDPVKMTMAVVEAVVKADVYCILNKGWSARLGGQSQKSIEVQLPNCVYDAGNVPHDWLFPRVDAAVHHGGSGTTGATMRAGVPTVIKPFFGDQYFYANRIEDIGAGIALRKLNACTLSRALKEVTTNTRIIAKAKKIGQDISKEDGVATAIAFIYSEMAYAKSLIKAKRQEDKKAAKEAKQIQNEDSWLLL.

2 disordered regions span residues 1-76 and 104-189; these read MLKG…AASP and QLAT…MTSK. Residues 48 to 57 show a composition bias toward basic and acidic residues; the sequence is KHKEAERRLT. The segment covering 114 to 135 has biased composition (acidic residues); sequence AGADETEDEMDEAGDETGDDAD. The segment covering 154–171 has biased composition (basic and acidic residues); the sequence is ESRRSTLFELSIEPHPES. A compositionally biased stretch (basic residues) spans 179–189; sequence TKNRRSRMTSK. A GRAM 1 domain is found at 188-229; the sequence is SKLRSKFNLDDDEELVREYPCWLLRDVLIQGHIYLTSRNLLF. A PH domain is found at 239-342; the sequence is SARLTGNLSI…WSSALKKQVF (104 aa). Low complexity predominate over residues 449–469; it reads DAAIASEAAADAAAADTASHS. Disordered regions lie at residues 449-484 and 523-550; these read DAAI…RSTE and TLKL…LESR. One can recognise a GRAM 2 domain in the interval 602-668; sequence KRFKAHFSLT…HDVENCYKEQ (67 aa). Residues Ser-786, Arg-787, Asp-789, Asn-1060, Asn-1088, Val-1089, His-1091, His-1104, Ser-1107, Gly-1108, Thr-1109, Asp-1128, and Gln-1129 each coordinate UDP-alpha-D-glucose.

The protein belongs to the glycosyltransferase 28 family.

Its subcellular location is the cytoplasm. It localises to the membrane. It carries out the reaction a sterol + UDP-alpha-D-glucose = a sterol 3-beta-D-glucoside + UDP + H(+). The enzyme catalyses ergosterol + UDP-alpha-D-glucose = ergosteryl 3-beta-D-glucoside + UDP + H(+). In terms of biological role, sterol glycosyltransferase responsible for the glycosylation of ergosterol to form ergosterol-glucoside. This is Sterol 3-beta-glucosyltransferase from Eremothecium gossypii (strain ATCC 10895 / CBS 109.51 / FGSC 9923 / NRRL Y-1056) (Yeast).